The following is a 129-amino-acid chain: Small ribosomal subunit protein uS11 (129 aa).

This sequence belongs to the universal ribosomal protein uS11 family. Part of the 30S ribosomal subunit. Interacts with proteins S7 and S18. Binds to IF-3.

Its function is as follows. Located on the platform of the 30S subunit, it bridges several disparate RNA helices of the 16S rRNA. Forms part of the Shine-Dalgarno cleft in the 70S ribosome. The polypeptide is Small ribosomal subunit protein uS11 (Psychrobacter arcticus (strain DSM 17307 / VKM B-2377 / 273-4)).